We begin with the raw amino-acid sequence, 870 residues long: DNA-directed RNA polymerase subunit Rpo1N (870 aa).

Zn(2+) is bound by residues C60, C63, C70, H73, C100, C103, C146, and C149. Mg(2+) contacts are provided by D451, D453, and D455.

It belongs to the RNA polymerase beta' chain family. Part of the RNA polymerase complex. It depends on Mg(2+) as a cofactor. Zn(2+) is required as a cofactor.

Its subcellular location is the cytoplasm. The catalysed reaction is RNA(n) + a ribonucleoside 5'-triphosphate = RNA(n+1) + diphosphate. Its function is as follows. DNA-dependent RNA polymerase (RNAP) catalyzes the transcription of DNA into RNA using the four ribonucleoside triphosphates as substrates. Forms the clamp head domain. This Methanothermobacter thermautotrophicus (strain ATCC 29096 / DSM 1053 / JCM 10044 / NBRC 100330 / Delta H) (Methanobacterium thermoautotrophicum) protein is DNA-directed RNA polymerase subunit Rpo1N.